A 75-amino-acid polypeptide reads, in one-letter code: Tautomerase PptA (75 aa).

P2 acts as the Proton acceptor; via imino nitrogen in catalysis.

The protein belongs to the 4-oxalocrotonate tautomerase family. PptA subfamily. In terms of assembly, homodimer.

The protein localises to the cytoplasm. The protein is Tautomerase PptA of Klebsiella pneumoniae (strain 342).